The following is a 115-amino-acid chain: Large ribosomal subunit protein bL20 (115 aa).

Belongs to the bacterial ribosomal protein bL20 family.

Binds directly to 23S ribosomal RNA and is necessary for the in vitro assembly process of the 50S ribosomal subunit. It is not involved in the protein synthesizing functions of that subunit. In Chlorobium luteolum (strain DSM 273 / BCRC 81028 / 2530) (Pelodictyon luteolum), this protein is Large ribosomal subunit protein bL20.